A 1367-amino-acid polypeptide reads, in one-letter code: Flocculation protein FLO11 (1367 aa).

The N-terminal stretch at Met-1 to Gly-21 is a signal peptide. Residues Ser-31–Gly-207 form the Flo11 domain. 3 cysteine pairs are disulfide-bonded: Cys-37/Cys-201, Cys-44/Cys-179, and Cys-141/Cys-205. The segment covering Lys-209–Cys-267 has biased composition (low complexity). Disordered stretches follow at residues Lys-209–Val-975 and Thr-1008–Pro-1032. 45 consecutive repeat copies span residues Ser-210 to Glu-219, Ser-220 to Glu-229, Ser-230 to Glu-239, Ser-240 to Glu-249, Pro-262 to Pro-274, Pro-275 to Pro-287, Pro-313 to Ala-327, Pro-328 to Ala-342, Pro-343 to Ala-354, Pro-355 to Ala-369, Pro-370 to Ala-381, Pro-382 to Ala-393, Pro-394 to Ala-408, Pro-409 to Ala-420, Pro-421 to Ala-432, Pro-433 to Ala-444, Pro-445 to Ala-456, Pro-457 to Ala-471, Pro-472 to Ala-483, Pro-484 to Ala-498, Pro-499 to Ala-510, Pro-511 to Ala-525, Pro-526 to Ala-540, Pro-541 to Ala-552, Pro-568 to Ala-579, Pro-580 to Ala-594, Pro-595 to Ala-609, Pro-610 to Ala-624, Pro-625 to Ala-636, Pro-637 to Ala-651, Pro-652 to Ala-666, Pro-667 to Ala-681, Pro-682 to Ala-693, Pro-694 to Ala-705, Pro-706 to Ala-720, Pro-721 to Ala-735, Pro-736 to Ala-750, Pro-751 to Ala-762, Pro-763 to Ala-777, Pro-778 to Ala-792, Pro-808 to Ala-822, Pro-838 to Ala-852, Pro-865 to Ala-879, Thr-937 to Pro-968, and Thr-981 to Pro-1012. Residues Ser-210–Glu-249 are 4 X 10 AA repeats, Ser/Thr-rich. The tract at residues Pro-262–Pro-287 is 2 X 13 AA repeats, Thr-rich. The span at Thr-281–Thr-292 shows a compositional bias: basic and acidic residues. Low complexity-rich tracts occupy residues Thr-302–Pro-900 and Thr-910–Thr-948. A 22 X 15 AA approximate repeats, Ser-rich region spans residues Pro-313–Ala-852. Residues Pro-343 to Ala-762 form a 15 X 12 AA repeats, Ser/Thr-rich region. Asn-817 is a glycosylation site (N-linked (GlcNAc...) asparagine). Residue Asn-874 is glycosylated (N-linked (GlcNAc...) asparagine). The tract at residues Thr-937 to Pro-1119 is 3 X 32 AA tandem repeats, Thr-rich. Positions Asn-949 to Lys-961 are enriched in polar residues. Low complexity predominate over residues Thr-962–Val-975. Over residues Ser-1014–Pro-1032 the composition is skewed to low complexity. One copy of the 5-3 repeat lies at Thr-1088–Pro-1119. Gly-1346 carries the GPI-anchor amidated glycine lipid modification. The propeptide at Ala-1347–Phe-1367 is removed in mature form.

The protein belongs to the flocculin family. Highly divergent. In terms of processing, extensively O-mannosylated. Post-translationally, the GPI-anchor is attached to the protein in the endoplasmic reticulum and serves to target the protein to the cell surface. There, the glucosamine-inositol phospholipid moiety is cleaved off and the GPI-modified mannoprotein is covalently attached via its lipidless GPI glycan remnant to the 1,6-beta-glucan of the outer cell wall layer. A soluble form is probably produced by proteolytic cleavage at the cell surface (shedding).

Its subcellular location is the secreted. It localises to the cell wall. The protein resides in the membrane. Functionally, homophilic binding protein that enables kin discrimination in heterogeneous yeast populations by mediating homotypic cell-cell interactions during flocculation, a reversible and asexual process in which cells adhere to form aggregates (flocs). Plays a role in cell-substrate adhesion, haploid invasive growth, diploid pseudohyphae formation and biofilm (flor) development. Adhesive activity is inhibited by mannose, but not by glucose, maltose, sucrose or galactose. This chain is Flocculation protein FLO11, found in Saccharomyces cerevisiae (strain ATCC 204508 / S288c) (Baker's yeast).